We begin with the raw amino-acid sequence, 321 residues long: Lipoyl synthase (321 aa).

7 residues coordinate [4Fe-4S] cluster: Cys-68, Cys-73, Cys-79, Cys-94, Cys-98, Cys-101, and Ser-308. Positions 80–297 constitute a Radical SAM core domain; the sequence is FNHGTATFMI…KEVALELGFT (218 aa).

This sequence belongs to the radical SAM superfamily. Lipoyl synthase family. [4Fe-4S] cluster serves as cofactor.

It localises to the cytoplasm. It carries out the reaction [[Fe-S] cluster scaffold protein carrying a second [4Fe-4S](2+) cluster] + N(6)-octanoyl-L-lysyl-[protein] + 2 oxidized [2Fe-2S]-[ferredoxin] + 2 S-adenosyl-L-methionine + 4 H(+) = [[Fe-S] cluster scaffold protein] + N(6)-[(R)-dihydrolipoyl]-L-lysyl-[protein] + 4 Fe(3+) + 2 hydrogen sulfide + 2 5'-deoxyadenosine + 2 L-methionine + 2 reduced [2Fe-2S]-[ferredoxin]. The protein operates within protein modification; protein lipoylation via endogenous pathway; protein N(6)-(lipoyl)lysine from octanoyl-[acyl-carrier-protein]: step 2/2. Functionally, catalyzes the radical-mediated insertion of two sulfur atoms into the C-6 and C-8 positions of the octanoyl moiety bound to the lipoyl domains of lipoate-dependent enzymes, thereby converting the octanoylated domains into lipoylated derivatives. This Vibrio cholerae serotype O1 (strain ATCC 39315 / El Tor Inaba N16961) protein is Lipoyl synthase.